A 291-amino-acid polypeptide reads, in one-letter code: 33 kDa chaperonin (291 aa).

Cystine bridges form between Cys-237–Cys-239 and Cys-270–Cys-273.

It belongs to the HSP33 family. Under oxidizing conditions two disulfide bonds are formed involving the reactive cysteines. Under reducing conditions zinc is bound to the reactive cysteines and the protein is inactive.

Its subcellular location is the cytoplasm. Its function is as follows. Redox regulated molecular chaperone. Protects both thermally unfolding and oxidatively damaged proteins from irreversible aggregation. Plays an important role in the bacterial defense system toward oxidative stress. The protein is 33 kDa chaperonin of Bacillus mycoides (strain KBAB4) (Bacillus weihenstephanensis).